A 235-amino-acid polypeptide reads, in one-letter code: Putative cobalt transport protein CbiM 2 (235 aa).

7 consecutive transmembrane segments (helical) span residues 8–28 (LPAI…AYGV), 40–60 (GILP…SLKM), 74–94 (GIGA…IVLI), 107–127 (TLGA…YLIY), 135–155 (LNFY…TYIV), 160–180 (LALA…SSFS), and 185–205 (IFAI…ALLF).

It belongs to the CbiM family. Forms an energy-coupling factor (ECF) transporter complex composed of an ATP-binding protein (A component, CbiO), a transmembrane protein (T component, CbiQ) and 2 possible substrate-capture proteins (S components, CbiM and CbiN) of unknown stoichimetry.

The protein localises to the cell membrane. Its pathway is cofactor biosynthesis; adenosylcobalamin biosynthesis. Its function is as follows. Part of the energy-coupling factor (ECF) transporter complex CbiMNOQ involved in cobalt import. This chain is Putative cobalt transport protein CbiM 2, found in Methanosarcina barkeri (strain Fusaro / DSM 804).